Reading from the N-terminus, the 205-residue chain is Probable GTP-binding protein EngB (205 aa).

The EngB-type G domain occupies 29-203 (QGAEIAFIGR…KAVLSQWFRS (175 aa)). GTP-binding positions include 37 to 44 (GRSNAGKS), 64 to 68 (GRTQM), 82 to 85 (DLPG), 149 to 152 (TKSD), and 182 to 184 (FSS). Residues Ser44 and Thr66 each coordinate Mg(2+).

Belongs to the TRAFAC class TrmE-Era-EngA-EngB-Septin-like GTPase superfamily. EngB GTPase family. The cofactor is Mg(2+).

Necessary for normal cell division and for the maintenance of normal septation. The sequence is that of Probable GTP-binding protein EngB from Coxiella burnetii (strain RSA 331 / Henzerling II).